A 305-amino-acid polypeptide reads, in one-letter code: uncharacterized protein (305 aa).

Residues 208–236 form a disordered region; that stretch reads SYAQSPAVKKKKWRHSGGKKNNPRENHID. A compositionally biased stretch (basic residues) spans 215-225; sequence VKKKKWRHSGG.

This is an uncharacterized protein from Bacillus subtilis (strain 168).